The chain runs to 747 residues: Homeobox-leucine zipper protein GLABRA 2 (747 aa).

The tract at residues 31-112 is disordered; it reads RNASSGSTNP…KKYHRHTTDQ (82 aa). The segment covering 58 to 68 has biased composition (polar residues); the sequence is EMSSENSGPTR. A compositionally biased stretch (acidic residues) spans 73–90; sequence EDLEGEDHDDEEEEEEDG. Residues 97-107 are compositionally biased toward basic residues; sequence TNKRKRKKYHR. The homeobox DNA-binding region spans 101 to 160; it reads KRKKYHRHTTDQIRHMEALFKETPHPDEKQRQQLSKQLGLAPRQVKFWFQNRRTQIKAIQ. The stretch at 155–223 forms a coiled coil; that stretch reads QIKAIQERHE…LDKLRAALGR (69 aa). Residues 250-489 form the START domain; it reads FALEKSRIAE…LQLHCERLVF (240 aa).

Belongs to the HD-ZIP homeobox family. Class IV subfamily. In terms of assembly, interacts with GIR1 and GIR2. As to expression, expressed in individual developing trichome cells of the emerging leaf primordia. Expressed in differentiating hairless cells of root epidermis.

The protein localises to the nucleus. In terms of biological role, transcription factor involved in the determination of epidermal cell identity. Required for correct morphological development and maturation of trichomes. Regulates the frequency of trichome initiation and determines trichome spacing. Acts as a negative factor for root hair development. Required for ectopic repression of root hair development in a subset of epidermal cells. May suppress hair formation in root epidermis by promoting differentiation into hairless epidermal cells. Directly suppresses the bHLH transcription factor genes, RHD6, RSL1, RSL2, LRL1, and LRL2, which have diverse functions in root hair development. Required for normal development of seed coat mucilage. Involved in the control of seed oil accumulation. Acts as a negative regulator of anthocyanin biosynthesis. May directly repress the expression of some component genes from the MYB-bHLH-WD40 (MBW) transcriptional activator complex. The MBW complex activates the transcription of late biosynthesis genes in the flavonoid pathway, leading to the production of anthocyanins. The protein is Homeobox-leucine zipper protein GLABRA 2 of Arabidopsis thaliana (Mouse-ear cress).